A 493-amino-acid polypeptide reads, in one-letter code: 3-octaprenyl-4-hydroxybenzoate carboxy-lyase (493 aa).

Mn(2+) is bound at residue Asn172. Prenylated FMN contacts are provided by residues 175-177 (IYR), 189-191 (RWL), and 194-195 (RG). Mn(2+) is bound at residue Glu238. The Proton donor role is filled by Asp287.

This sequence belongs to the UbiD family. In terms of assembly, homohexamer. Prenylated FMN serves as cofactor. Mn(2+) is required as a cofactor.

It localises to the cell membrane. The enzyme catalyses a 4-hydroxy-3-(all-trans-polyprenyl)benzoate + H(+) = a 2-(all-trans-polyprenyl)phenol + CO2. It participates in cofactor biosynthesis; ubiquinone biosynthesis. Its function is as follows. Catalyzes the decarboxylation of 3-octaprenyl-4-hydroxy benzoate to 2-octaprenylphenol, an intermediate step in ubiquinone biosynthesis. The chain is 3-octaprenyl-4-hydroxybenzoate carboxy-lyase from Shewanella sediminis (strain HAW-EB3).